The sequence spans 145 residues: Probable low molecular weight protein-tyrosine-phosphatase EpsP (145 aa).

Cys9 functions as the Nucleophile in the catalytic mechanism. Residue Arg15 is part of the active site. The active-site Proton donor is Asp114.

It belongs to the low molecular weight phosphotyrosine protein phosphatase family.

The enzyme catalyses O-phospho-L-tyrosyl-[protein] + H2O = L-tyrosyl-[protein] + phosphate. The protein operates within glycan metabolism; exopolysaccharide biosynthesis. Its function is as follows. May be involved in assembly or function of the EPS I polymerization/export complex and/or the EpsB ATPase. Alternatively it may function in the removal of the terminal phosphate from C55-isoprenyl pyrophosphate in order to recycle the C55-isoprenyl phosphate lipid carrier used in the synthesis of polysaccharide repeat units. This is Probable low molecular weight protein-tyrosine-phosphatase EpsP (epsP) from Ralstonia nicotianae (strain ATCC BAA-1114 / GMI1000) (Ralstonia solanacearum).